The chain runs to 269 residues: Formamidopyrimidine-DNA glycosylase (269 aa).

Proline 2 serves as the catalytic Schiff-base intermediate with DNA. Catalysis depends on glutamate 3, which acts as the Proton donor. Lysine 57 serves as the catalytic Proton donor; for beta-elimination activity. Residues histidine 90, arginine 109, and lysine 150 each coordinate DNA. Residues 235–269 (QVYGRKGEPCRVCGTPIVATKHAQRATFYCRHCQK) form an FPG-type zinc finger. The active-site Proton donor; for delta-elimination activity is arginine 259.

This sequence belongs to the FPG family. As to quaternary structure, monomer. The cofactor is Zn(2+).

It catalyses the reaction Hydrolysis of DNA containing ring-opened 7-methylguanine residues, releasing 2,6-diamino-4-hydroxy-5-(N-methyl)formamidopyrimidine.. The catalysed reaction is 2'-deoxyribonucleotide-(2'-deoxyribose 5'-phosphate)-2'-deoxyribonucleotide-DNA = a 3'-end 2'-deoxyribonucleotide-(2,3-dehydro-2,3-deoxyribose 5'-phosphate)-DNA + a 5'-end 5'-phospho-2'-deoxyribonucleoside-DNA + H(+). In terms of biological role, involved in base excision repair of DNA damaged by oxidation or by mutagenic agents. Acts as a DNA glycosylase that recognizes and removes damaged bases. Has a preference for oxidized purines, such as 7,8-dihydro-8-oxoguanine (8-oxoG). Has AP (apurinic/apyrimidinic) lyase activity and introduces nicks in the DNA strand. Cleaves the DNA backbone by beta-delta elimination to generate a single-strand break at the site of the removed base with both 3'- and 5'-phosphates. This is Formamidopyrimidine-DNA glycosylase from Salmonella agona (strain SL483).